Consider the following 86-residue polypeptide: MIOREX complex component 7 (86 aa).

Associates with the mitochondrial ribosome.

The protein resides in the mitochondrion. Component of MIOREX complexes, large expressome-like assemblies of ribosomes with factors involved in all the steps of post-transcriptional gene expression. The sequence is that of MIOREX complex component 7 from Saccharomyces cerevisiae (strain ATCC 204508 / S288c) (Baker's yeast).